The sequence spans 559 residues: MLCTAPLVSSAASAVLLAFAIPNEFWLAGSSVLGLGALVPLYVGFLLSPAKKHVACSYGLFVALVHACSSFWLKNFQGFALFTLGASTVGYFFYALPFGVAFACILRKQAPARACAFALVWTLWEWVKSTGILAYPWGTVPMTAHSLSHLIQIADITGVWGLSFLIPLANACVAESLHFFIKKRDSVPVFRLWLLTGCLYCLCSLYGAYRIATLGAPRTTLALAIVQQNADPWDTXSFEKNLTTAIHLTETALRTQTAPPLPTTPYRKEKTLTHASARAPVDMVVWSESSLRYPYEQYRHVYNALPAARPFSAFLRTLGAPLLVGTPLRLSGNSTKGGYANAVALLRPDGHVAQVYGKMQMVPFAEFIPWGHMTSVQRLAQMLAGFSESWTPGPGPRLFHVPCAAGGSVRFATPICYEDAFPSLCAALHTQGSELLINLTNDSWSKTASAEWQHYVVSLFRAIELRTTLVRSTNSGYTVVIGPEGKTRAAFPLFQATSAVLHVPVYPVVRTYYARMRDWVIVLCALIFFAEGVRMAVHTRRHSTTQAESSLQQIRGEHV.

Helical transmembrane passes span 27–47 (LAGS…GFLL), 53–73 (HVAC…SFWL), 86–106 (ASTV…ACIL), 114–134 (ACAF…GILA), 153–173 (IADI…NACV), and 187–207 (VPVF…SLYG). One can recognise a CN hydrolase domain in the interval 221 to 507 (LALAIVQQNA…SAVLHVPVYP (287 aa)). Glutamate 288 (proton acceptor) is an active-site residue. The active site involves lysine 358. Catalysis depends on cysteine 416, which acts as the Nucleophile. A helical transmembrane segment spans residues 519–539 (WVIVLCALIFFAEGVRMAVHT).

It belongs to the CN hydrolase family. Apolipoprotein N-acyltransferase subfamily.

The protein resides in the cell inner membrane. It carries out the reaction N-terminal S-1,2-diacyl-sn-glyceryl-L-cysteinyl-[lipoprotein] + a glycerophospholipid = N-acyl-S-1,2-diacyl-sn-glyceryl-L-cysteinyl-[lipoprotein] + a 2-acyl-sn-glycero-3-phospholipid + H(+). The protein operates within protein modification; lipoprotein biosynthesis (N-acyl transfer). In terms of biological role, catalyzes the phospholipid dependent N-acylation of the N-terminal cysteine of apolipoprotein, the last step in lipoprotein maturation. The chain is Apolipoprotein N-acyltransferase 2 from Treponema pallidum (strain Nichols).